We begin with the raw amino-acid sequence, 782 residues long: LINE-1 type transposase domain-containing protein 1 (782 aa).

Disordered regions lie at residues 1 to 30 (MSGVQSKAARLQKERKEKLSADRERKTATS), 90 to 200 (QEGD…GGAG), and 338 to 397 (NKGT…SAEE). Composition is skewed to basic and acidic residues over residues 11-27 (LQKERKEKLSADRERKT) and 95-107 (ISERPKPGEKVEE). Ser136 is modified (phosphoserine). Composition is skewed to basic and acidic residues over residues 143 to 158 (SLERGGEALRGEHGRC) and 183 to 194 (EENRLKAPKESP). The segment covering 347-396 (GEEEEISETQGEETSEGETSELGEEEGSESEEEEESSESEEEEESSESAE) has biased composition (acidic residues). Phosphoserine is present on residues Ser407, Ser409, Ser442, Ser478, Ser490, Ser559, and Ser567.

The protein belongs to the transposase 22 family.

This chain is LINE-1 type transposase domain-containing protein 1 (L1td1), found in Mus musculus (Mouse).